The primary structure comprises 384 residues: Cytochrome b (384 aa).

4 helical membrane passes run 32–52, 76–98, 113–133, and 179–199; these read LGSL…FLAM, WLIR…IHIG, VWTV…LGYC, and FFTF…MHLM. Residues His-82 and His-96 each coordinate heme b. Positions 183 and 197 each coordinate heme b. His-202 provides a ligand contact to a ubiquinone. The next 4 helical transmembrane spans lie at 225–245, 289–309, 321–341, and 348–368; these read FIFK…LFVF, LGGV…PITD, LSKF…KLGE, and FILM…ILVP.

The protein belongs to the cytochrome b family. In terms of assembly, fungal cytochrome b-c1 complex contains 10 subunits; 3 respiratory subunits, 2 core proteins and 5 low-molecular weight proteins. Cytochrome b-c1 complex is a homodimer. Heme b serves as cofactor.

It localises to the mitochondrion inner membrane. Its function is as follows. Component of the ubiquinol-cytochrome c reductase complex (complex III or cytochrome b-c1 complex) that is part of the mitochondrial respiratory chain. The b-c1 complex mediates electron transfer from ubiquinol to cytochrome c. Contributes to the generation of a proton gradient across the mitochondrial membrane that is then used for ATP synthesis. In Eremothecium gossypii (strain ATCC 10895 / CBS 109.51 / FGSC 9923 / NRRL Y-1056) (Yeast), this protein is Cytochrome b (COB).